The following is a 330-amino-acid chain: Peroxidase 70 (330 aa).

The signal sequence occupies residues 1 to 24; sequence MRSFTNLNPCYVLLPFFLVLATNA. 4 disulfide bridges follow: cysteine 43–cysteine 119, cysteine 76–cysteine 81, cysteine 125–cysteine 326, and cysteine 202–cysteine 234. The active-site Proton acceptor is the histidine 74. 5 residues coordinate Ca(2+): aspartate 75, valine 78, glycine 80, aspartate 82, and serine 84. A substrate-binding site is contributed by proline 165. Position 195 (histidine 195) interacts with heme b. Threonine 196 is a Ca(2+) binding site. Residues aspartate 247, serine 250, and aspartate 255 each coordinate Ca(2+).

Belongs to the peroxidase family. Classical plant (class III) peroxidase subfamily. It depends on heme b as a cofactor. The cofactor is Ca(2+).

Its subcellular location is the secreted. It catalyses the reaction 2 a phenolic donor + H2O2 = 2 a phenolic radical donor + 2 H2O. Removal of H(2)O(2), oxidation of toxic reductants, biosynthesis and degradation of lignin, suberization, auxin catabolism, response to environmental stresses such as wounding, pathogen attack and oxidative stress. These functions might be dependent on each isozyme/isoform in each plant tissue. The protein is Peroxidase 70 (PER70) of Arabidopsis thaliana (Mouse-ear cress).